A 307-amino-acid polypeptide reads, in one-letter code: Elongation factor Ts (307 aa).

Residues 80 to 83 form an involved in Mg(2+) ion dislocation from EF-Tu region; that stretch reads TDFV.

It belongs to the EF-Ts family.

It localises to the cytoplasm. Functionally, associates with the EF-Tu.GDP complex and induces the exchange of GDP to GTP. It remains bound to the aminoacyl-tRNA.EF-Tu.GTP complex up to the GTP hydrolysis stage on the ribosome. The chain is Elongation factor Ts from Methylobacterium sp. (strain 4-46).